A 176-amino-acid chain; its full sequence is 2-oxo-4-hydroxy-4-carboxy-5-ureidoimidazoline decarboxylase (176 aa).

The active-site Proton donor; for OHCU decarboxylase activity is the His-70. Substrate-binding positions include Pro-71, 83 to 87 (SQEEQ), and 118 to 122 (FIMAV). A disordered region spans residues 72–96 (DLGERTEMTDESQEEQASAGLDRLP).

This sequence belongs to the OHCU decarboxylase family.

It catalyses the reaction 5-hydroxy-2-oxo-4-ureido-2,5-dihydro-1H-imidazole-5-carboxylate + H(+) = (S)-allantoin + CO2. Its pathway is purine metabolism; urate degradation; (S)-allantoin from urate: step 3/3. Its function is as follows. Catalyzes the stereoselective decarboxylation of 2-oxo-4-hydroxy-4-carboxy-5-ureidoimidazoline (OHCU) to (S)-allantoin. This is 2-oxo-4-hydroxy-4-carboxy-5-ureidoimidazoline decarboxylase from Halalkalicoccus jeotgali (strain DSM 18796 / CECT 7217 / JCM 14584 / KCTC 4019 / B3).